The sequence spans 612 residues: Probable translation initiation factor IF-2 (612 aa).

The region spanning 11-229 (LRQPIVVVLG…VLAGLTQRYL (219 aa)) is the tr-type G domain. Positions 20–27 (GHVDHGKT) are G1. Residue 20–27 (GHVDHGKT) participates in GTP binding. Positions 45 to 49 (LITQH) are G2. Residues 84-87 (DTPG) are G3. GTP contacts are provided by residues 84 to 88 (DTPGH) and 138 to 141 (NKID). The G4 stretch occupies residues 138–141 (NKID). The interval 207–209 (SAK) is G5.

It belongs to the TRAFAC class translation factor GTPase superfamily. Classic translation factor GTPase family. IF-2 subfamily.

Function in general translation initiation by promoting the binding of the formylmethionine-tRNA to ribosomes. Seems to function along with eIF-2. The polypeptide is Probable translation initiation factor IF-2 (Hyperthermus butylicus (strain DSM 5456 / JCM 9403 / PLM1-5)).